A 326-amino-acid polypeptide reads, in one-letter code: Vitamin B12 import system permease protein BtuC (326 aa).

A run of 9 helical transmembrane segments spans residues 15-35 (WLLC…CAGE), 61-81 (LAVL…QALF), 88-108 (PGLL…VLLG), 112-132 (LPNW…TLIL), 146-166 (LLAG…AIYF), 184-204 (GGVD…LLWI), 240-260 (GWMV…GLVI), 274-294 (VLLP…DIVA), and 302-322 (ELPI…WLLL).

Belongs to the binding-protein-dependent transport system permease family. FecCD subfamily. As to quaternary structure, the complex is composed of two ATP-binding proteins (BtuD), two transmembrane proteins (BtuC) and a solute-binding protein (BtuF).

Its subcellular location is the cell inner membrane. In terms of biological role, part of the ABC transporter complex BtuCDF involved in vitamin B12 import. Involved in the translocation of the substrate across the membrane. This is Vitamin B12 import system permease protein BtuC from Shigella sonnei (strain Ss046).